The chain runs to 1038 residues: Translation initiation factor IF-2 (1038 aa).

Disordered stretches follow at residues 39–346 (TISE…KWQE) and 403–451 (KPKA…PEKV). Positions 103–125 (RNTTSNAPEASVANNQIASSEAN) are enriched in polar residues. Positions 157–176 (PQKPAAPEAEPEAQSQAPAK) are enriched in low complexity. Composition is skewed to basic and acidic residues over residues 178 to 197 (AVEK…ERQP) and 226 to 243 (PILK…DQAK). Over residues 407–423 (ARAATAATAAPISSPTT) the composition is skewed to low complexity. Residues 431–450 (NNRDQNRRQETEVKRERPEK) show a composition bias toward basic and acidic residues. The tr-type G domain occupies 532-705 (RRPPVVTIMG…LLVAEVGELS (174 aa)). The tract at residues 541-548 (GHVDHGKT) is G1. Position 541 to 548 (541 to 548 (GHVDHGKT)) interacts with GTP. Residues 566–570 (GITQH) form a G2 region. The tract at residues 591 to 594 (DTPG) is G3. GTP is bound by residues 591 to 595 (DTPGH) and 645 to 648 (NKID). Positions 645–648 (NKID) are G4. Residues 681–683 (SAI) form a G5 region.

Belongs to the TRAFAC class translation factor GTPase superfamily. Classic translation factor GTPase family. IF-2 subfamily.

It is found in the cytoplasm. One of the essential components for the initiation of protein synthesis. Protects formylmethionyl-tRNA from spontaneous hydrolysis and promotes its binding to the 30S ribosomal subunits. Also involved in the hydrolysis of GTP during the formation of the 70S ribosomal complex. The protein is Translation initiation factor IF-2 of Trichormus variabilis (strain ATCC 29413 / PCC 7937) (Anabaena variabilis).